The sequence spans 876 residues: Phosphoenolpyruvate carboxylase (876 aa).

Residues H138 and K543 contribute to the active site.

It belongs to the PEPCase type 1 family. Requires Mg(2+) as cofactor.

The catalysed reaction is oxaloacetate + phosphate = phosphoenolpyruvate + hydrogencarbonate. Its function is as follows. Forms oxaloacetate, a four-carbon dicarboxylic acid source for the tricarboxylic acid cycle. This Pseudomonas fluorescens (strain ATCC BAA-477 / NRRL B-23932 / Pf-5) protein is Phosphoenolpyruvate carboxylase.